We begin with the raw amino-acid sequence, 150 residues long: Viral late gene transcription factor 2 (150 aa).

This sequence belongs to the orthopoxvirus VLTF-2/OPG126 family. In terms of assembly, interacts with itself. Interacts with the late transcription factors VLTF-1/OPG093.

In terms of biological role, acts with RNA polymerase to initiate transcription from late gene promoters. The chain is Viral late gene transcription factor 2 (OPG126) from Vaccinia virus (strain Copenhagen) (VACV).